The primary structure comprises 594 residues: P-granule-associated novel protein 1 (594 aa).

Residues 1–18 (MRSLLSFVLLALARIAIS) form the signal peptide. Topologically, residues 19-513 (EETKSCIDIE…PEEEEVYRSG (495 aa)) are extracellular. LRR repeat units lie at residues 78–101 (GTEL…LFEN), 103–124 (FAKQ…SFQS), 125–149 (LGGS…LFTG), 150–173 (LKSL…AFEE), 175–197 (KKVE…TFDG), 198–221 (MKNL…AFRG), 222–245 (LNSL…IFSA), 246–269 (LKNL…SFPK), 271–290 (EKLV…KLKD), 291–315 (LPSL…MFGL), 318–341 (SDRI…AFQH), 343–365 (PNLI…SPSQ), 374–397 (LKKL…ELPK), 399–419 (LSSL…ALEG), and 420–442 (MEIK…TFDS). The chain crosses the membrane as a helical span at residues 514–534 (WITVAATILTIVTIVIMVIIA). Topologically, residues 535–594 (MLYFKDARYQFPLRGRRSDSDLHKLIENDPLNIASDSILVVPAMPKRNTGPKKTVRFQNF) are cytoplasmic.

Interacts with glh-1. Interacts (via LRR regions) with myrf-1 (via C-terminus); the interaction promotes the role of myrf-1 in the synaptic remodeling of DD GABAergic motor neurons at the cell membrane. As to expression, expressed in the germline and somatic cells. Expressed in the germline and somatic cells. Expressed at higher levels in germline cells relative to somatic cells. In terms of tissue distribution, expressed in germline cells. As to expression, highly expressed in the pharynx and at lower levels in the intestine, but not detected in other tissues. Other studies suggest a broader expression pattern in somatic tissues: from embryogenesis to adult stages, expressed strongly in body wall muscle, vulva, somatic gonad and pharynx, at lower levels in the nerve ring, hypodermis, and rectal epithelia, and very weakly in the intestine.

It is found in the cytoplasm. The protein resides in the apical cell membrane. Functionally, regulates diverse developmental processes including larval molting and gonad maturation. Its function is as follows. Promotes the localization of myrf-1 and myrf-2 to the cell membrane. In association with myrf-1, promotes the synaptic remodeling of DD GABAergic motor neurons whereby new synapses form in the dorsal processes of DD neurons. The polypeptide is P-granule-associated novel protein 1 (Caenorhabditis elegans).